The chain runs to 245 residues: tRNA1(Val) (adenine(37)-N6)-methyltransferase (245 aa).

Belongs to the methyltransferase superfamily. tRNA (adenine-N(6)-)-methyltransferase family.

The protein resides in the cytoplasm. The catalysed reaction is adenosine(37) in tRNA1(Val) + S-adenosyl-L-methionine = N(6)-methyladenosine(37) in tRNA1(Val) + S-adenosyl-L-homocysteine + H(+). Its function is as follows. Specifically methylates the adenine in position 37 of tRNA(1)(Val) (anticodon cmo5UAC). In Salmonella paratyphi C (strain RKS4594), this protein is tRNA1(Val) (adenine(37)-N6)-methyltransferase.